The sequence spans 317 residues: Hairy/enhancer-of-split related with YRPW motif protein 1 (317 aa).

Residues 1–59 are disordered; that stretch reads MKRNHDFSSSDSELDENIEVEKESADENAGANSPLGSMSPSTTSQVQARKRRRGIIEKR. Residues 30-47 show a composition bias toward polar residues; it reads GANSPLGSMSPSTTSQVQ. The bHLH domain occupies 48 to 103; sequence ARKRRRGIIEKRRRDRINNSLSELRRLVPSAFEKQGSAKLEKAEILQMTVDHLKML. One can recognise an Orange domain in the interval 121–157; it reads YRGLGFRECLAETARYLSIIEGLDNTDPLRIRLVSHL. Composition is skewed to low complexity over residues 193–226 and 248–264; these read QQQQQQGAPLARSTSSPPSSNSSSPSSSSPSAPS and PPSTSLPPGLTPPTASK. A disordered region spans residues 193–264; the sequence is QQQQQQGAPL…PGLTPPTASK (72 aa). The short motif at 307-310 is the YRPW motif element; that stretch reads YRPW.

The protein belongs to the HEY family.

It is found in the nucleus. Functionally, transcriptional repressor which functions as a downstream effector of Notch signaling. The polypeptide is Hairy/enhancer-of-split related with YRPW motif protein 1 (hey1) (Danio rerio (Zebrafish)).